An 88-amino-acid polypeptide reads, in one-letter code: Cell division topological specificity factor (88 aa).

It belongs to the MinE family.

Functionally, prevents the cell division inhibition by proteins MinC and MinD at internal division sites while permitting inhibition at polar sites. This ensures cell division at the proper site by restricting the formation of a division septum at the midpoint of the long axis of the cell. The sequence is that of Cell division topological specificity factor from Aromatoleum aromaticum (strain DSM 19018 / LMG 30748 / EbN1) (Azoarcus sp. (strain EbN1)).